The sequence spans 509 residues: MRCDGEVIIVGSGIAAMMSAYLLRKSFHVIMITKSDVFASNSFLAQGGIAAPIAEGDDWQAHTADTWKAGAAHGDETSIEMMTKHAVNMIELLDDLGVSFDREESGGYSLGLEGAHGTRRIVHVNGAETGKAVMRALWKAIKNEITLLDRTCVYRFIKNKDEIIGVETDQGSLFAPVTIVATGGCGQMYSVTSNGKEATGDGIALAYRSGAAISDVEFIQFHPTVYTGNEKEKGLLISEAVRGEGGQLITSAGERLQSLKSRDVVSREIFRQEREGHTVHLDLTGISDFERKFPALYKGFNKSDRRTLKPRVTPGAHFLNGGISVDAWGQTSLSRLYAVGEVACTGVHGANRLASNSLLEGLVFAHQAATHIQQTFQPLTAGLFVERDKAEPRSFKLPTREDLQKKMMRYVGIERHARSLWYMNNWFQPFLDTAHYNGPWPERDMFEQANMTLLASLITRSAAIRTESRGGHFRADYPNGLDKFQQLIIEWQNGAHMKRQRPTIKELSR.

FAD is bound by residues 12–15 (SGIA), Lys34, 41–48 (NSFLAQGG), and Asp201. Arg262 acts as the Proton donor/acceptor in catalysis. Residues Glu341 and 357–358 (SL) each bind FAD.

This sequence belongs to the FAD-dependent oxidoreductase 2 family. NadB subfamily. FAD serves as cofactor.

The protein localises to the cytoplasm. The enzyme catalyses L-aspartate + O2 = iminosuccinate + H2O2. Its pathway is cofactor biosynthesis; NAD(+) biosynthesis; iminoaspartate from L-aspartate (oxidase route): step 1/1. Its function is as follows. Catalyzes the oxidation of L-aspartate to iminoaspartate, the first step in the de novo biosynthesis of NAD(+). This chain is L-aspartate oxidase (nadB), found in Halalkalibacterium halodurans (strain ATCC BAA-125 / DSM 18197 / FERM 7344 / JCM 9153 / C-125) (Bacillus halodurans).